A 303-amino-acid chain; its full sequence is Probable porphobilinogen deaminase (303 aa).

An S-(dipyrrolylmethanemethyl)cysteine modification is found at Cys-233.

This sequence belongs to the HMBS family. Dipyrromethane is required as a cofactor.

It carries out the reaction 4 porphobilinogen + H2O = hydroxymethylbilane + 4 NH4(+). It functions in the pathway porphyrin-containing compound metabolism; protoporphyrin-IX biosynthesis; coproporphyrinogen-III from 5-aminolevulinate: step 2/4. In terms of biological role, tetrapolymerization of the monopyrrole PBG into the hydroxymethylbilane pre-uroporphyrinogen in several discrete steps. This Methanocella arvoryzae (strain DSM 22066 / NBRC 105507 / MRE50) protein is Probable porphobilinogen deaminase.